Here is a 456-residue protein sequence, read N- to C-terminus: Transforming growth factor beta-1-induced transcript 1 protein (456 aa).

Met-1 is subject to N-acetylmethionine. The disordered stretch occupies residues 1 to 79 (MEDLDALLSD…ATPPFSSSCG (79 aa)). The transcription activation stretch occupies residues 1–195 (MEDLDALLSD…DTPSPPGPTS (195 aa)). The interval 1-235 (MEDLDALLSD…CNKPIAGQVV (235 aa)) is interaction with PTK2B/PYK2. An LD motif 1 motif is present at residues 3 to 15 (DLDALLSDLETTT). At Thr-33 the chain carries Phosphothreonine. At Tyr-55 the chain carries Phosphotyrosine. Ser-63 carries the post-translational modification Phosphoserine. The segment at 78–131 (CGVLGTGLCELDRLLQELNATQFNITDEIMSQFPSSKETAGEQKEDQSEDKKRP) is interaction with PTK2/FAK1. The LD motif 2 motif lies at 87 to 99 (ELDRLLQELNATQ). The segment at 109 to 146 (QFPSSKETAGEQKEDQSEDKKRPSPPPSPSPVLPKPSA) is disordered. Over residues 116-130 (TAGEQKEDQSEDKKR) the composition is skewed to basic and acidic residues. A phosphoserine mark is found at Ser-132, Ser-136, Ser-138, Ser-159, Ser-181, and Ser-189. Pro residues predominate over residues 132-142 (SPPPSPSPVLP). The LD motif 3 motif lies at 152 to 163 (ELDRLMASLSDF). The interval 166–200 (QNHLPASGPTPPPVPSSMSEDTPSPPGPTSKGSLD) is disordered. Residues 198–210 (SLDTMLGLLQSDL) carry the LD motif 4 motif. 4 LIM zinc-binding domains span residues 221 to 280 (GLCG…RFSP), 281 to 338 (RCGL…QLFA), 339 to 398 (PRCQ…RRGS), and 399 to 456 (LCAT…KLFG). At Ser-398 the chain carries Phosphoserine. Position 402 is a phosphothreonine (Thr-402).

It belongs to the paxillin family. Homooligomer. Interacts with CRIP2, HSPB1, ILK, LIMS1, LIMS2, NCK2, NUDT16L1, PAK, PPARG, PTPN12, TCF3, TCF7L2 and VCL. Forms a complex with GIT1 and ARHGEF7. Interacts with AR/androgen receptor in a ligand-dependent manner. Interacts with CSK, LYN, MAPK15, NR3C1, PPARG, PTK2/FAK1, PTK2B/PYK2, SLC6A3, SLC6A4, SMAD3, SRC and talin. Interacts (via LIM zinc-binding domain 2) with CBLC (via RING-type zinc finger); the interaction is direct and enhances CBLC E3 ubiquitin-protein ligase activity. In terms of processing, phosphorylated by gonadotropin-releasing hormone-activated SRC.

Its subcellular location is the cell junction. It localises to the focal adhesion. The protein localises to the nucleus matrix. It is found in the cytoplasm. The protein resides in the cytoskeleton. Its function is as follows. Functions as a molecular adapter coordinating multiple protein-protein interactions at the focal adhesion complex and in the nucleus. Links various intracellular signaling modules to plasma membrane receptors and regulates the Wnt and TGFB signaling pathways. May also regulate SLC6A3 and SLC6A4 targeting to the plasma membrane hence regulating their activity. In the nucleus, functions as a nuclear receptor coactivator regulating glucocorticoid, androgen, mineralocorticoid and progesterone receptor transcriptional activity. May play a role in the processes of cell growth, proliferation, migration, differentiation and senescence. May have a zinc-dependent DNA-binding activity. This is Transforming growth factor beta-1-induced transcript 1 protein (TGFB1I1) from Bos taurus (Bovine).